A 336-amino-acid polypeptide reads, in one-letter code: MHSSKCPDLANIGRRRVLAGIALAMTTSSTRAQRLDAFPSRPITWVVPFPPGGAVDAIARIISRKMSESIGQQVVVDNRAGSGGIIGSDLVAKAPSDGHTILINSTGLVVDRFFYPRVPYQSDRDFVPVVLAATLPSVLVVPADSRFRDITQLLKAARENPGKLSFASAGLGTSIHLASALLAARANVELLHVPYRGSSPAVSDLVAGRVDMMIDSVTSQRQNILAKRVRALGVTSLDRHPQLPEVPTIAEAAGLPGFEVLTWCGVFAPKGTPRSVVERLNAEINKAIAAPDVVEALKQLGIKTAGGAPEVLADLFKSETERWQKLIVEYRLNANQ.

The N-terminal stretch at 1–32 (MHSSKCPDLANIGRRRVLAGIALAMTTSSTRA) is a signal peptide.

It belongs to the UPF0065 (bug) family.

The protein localises to the periplasm. This chain is UPF0065 protein in tcbD-tcbE intergenic region, found in Pseudomonas sp. (strain P51).